The chain runs to 527 residues: Organic cation/carnitine transporter 2 (527 aa).

At 1–27 the chain is on the cytoplasmic side; the sequence is MAEPTQPLLTDSNSSSPRSLDDTIESY. The helical transmembrane segment at 28 to 48 threads the bilayer; the sequence is IGSFGWAQFLQAALVSFSGVF. The Extracellular portion of the chain corresponds to 49-119; that stretch reads DAQQTFISVF…SFVKGLPESS (71 aa). The chain crosses the membrane as a helical span at residues 120 to 140; that stretch reads FFVGCLIGGLVLSTLADSSLG. Topologically, residues 141–149 are cytoplasmic; sequence RKNMLFLSC. Residues 150-170 traverse the membrane as a helical segment; the sequence is LVMAISTMLTVFSPNIWVYAV. Topologically, residues 171-176 are extracellular; that stretch reads LRFVNG. Residues 177–195 traverse the membrane as a helical segment; that stretch reads FGRATIGTCALVLSTELVG. 190-197 lines the ATP pocket; it reads STELVGKK. The Cytoplasmic portion of the chain corresponds to 196-201; sequence KKWRGR. Residues 202–222 traverse the membrane as a helical segment; it reads VGIMSFFGFMLGFLSLPLMAY. Residues 223–230 lie on the Extracellular side of the membrane; the sequence is MNRGSSWR. Residues 231–251 form a helical membrane-spanning segment; the sequence is ILYAWTSIPTIIYCVLVRFFV. The Cytoplasmic portion of the chain corresponds to 252-326; the sequence is CESPRWLFVR…LVEKRWALKR (75 aa). The chain crosses the membrane as a helical span at residues 327 to 347; sequence LSAVMAIAFGIGLVYYGMPLA. Topologically, residues 348–356 are extracellular; the sequence is LSNLDFNIY. The chain crosses the membrane as a helical span at residues 357-377; sequence LSAAFNALMDLPANLITLFLV. Over 378–385 the chain is Cytoplasmic; it reads DKLSRRNA. A helical membrane pass occupies residues 386-406; it reads LIGFTALGGVSSVLIFALHNM. Residues 407 to 415 lie on the Extracellular side of the membrane; that stretch reads RIGNHGALQ. Residues 416 to 436 traverse the membrane as a helical segment; it reads LALELISYFSACSAFNMEMIY. Topologically, residues 437-448 are cytoplasmic; sequence TIELFPTCVRNS. The helical transmembrane segment at 449-469 threads the bilayer; that stretch reads AIAMARQALVLGGVFSPIMVA. The Extracellular segment spans residues 470–475; it reads AGRKNA. The helical transmembrane segment at 476–496 threads the bilayer; it reads FWSFGLFGLAIGLLGLFAVGL. The Cytoplasmic segment spans residues 497 to 527; that stretch reads PETRGSDLCDTMDEEECKDRRSKVAVNNVIA.

Belongs to the major facilitator (TC 2.A.1) superfamily. Organic cation transporter (TC 2.A.1.19) family. Weakly expressed in roots, including tips and initiation site of lateral roots, siliques and flowers, especially in pollen and stigma.

Its subcellular location is the vacuole membrane. High affinity carnitine transporter involved in the active cellular uptake of carnitine. Also transports organic cations. This chain is Organic cation/carnitine transporter 2 (OCT2), found in Arabidopsis thaliana (Mouse-ear cress).